The primary structure comprises 345 residues: Ribonucleoside-diphosphate reductase small chain 2 (345 aa).

Position 1 is an N-acetylmethionine (Met-1). Tyr-131 is a catalytic residue. Phosphoserine occurs at positions 169 and 332. Thr-334 is modified (phosphothreonine). Ser-336 is modified (phosphoserine). Lys-337 participates in a covalent cross-link: Glycyl lysine isopeptide (Lys-Gly) (interchain with G-Cter in ubiquitin).

The protein belongs to the ribonucleoside diphosphate reductase small chain family. Heterotetramer of two large (R1) and two small (R2) subunits. S.cerevisiae has two different R1 subunits (RNR1 and RNR3) and two different R2 subunits (RNR2 and RNR4). The functional form of the small subunits is a RNR2-RNR4 heterodimer, where RNR2 provides the iron-radical center and RNR4 is required for proper folding of RNR2 and assembly with the large subunits. Under normal growth conditions, the active form of the large subunits is a homodimer of the constitutively expressed RNR1. In damaged cells or cells arrested for DNA synthesis, the reductase consists of multiple species because of the association of the small subunits (RNR2-RNR4) with either the RNR1 homodimer or a heterodimer of RNR1 and the damage-inducible RNR3. Interacts with DIF1.

It localises to the nucleus. The catalysed reaction is a 2'-deoxyribonucleoside 5'-diphosphate + [thioredoxin]-disulfide + H2O = a ribonucleoside 5'-diphosphate + [thioredoxin]-dithiol. Functionally, provides the precursors necessary for DNA synthesis. Catalyzes the biosynthesis of deoxyribonucleotides from the corresponding ribonucleotides. RNR4 is required for proper folding of RNR2 and assembly with the large subunits. The chain is Ribonucleoside-diphosphate reductase small chain 2 (RNR4) from Saccharomyces cerevisiae (strain ATCC 204508 / S288c) (Baker's yeast).